We begin with the raw amino-acid sequence, 264 residues long: Undecaprenyl-diphosphatase (264 aa).

A run of 7 helical transmembrane segments spans residues 38 to 58, 75 to 95, 106 to 126, 136 to 156, 181 to 201, 217 to 237, and 242 to 262; these read RSDF…VLVF, REYV…GLVV, VSPV…VEAY, VTWT…VFPG, FVFL…FLEM, VAFL…MGYI, and FTAF…WLPS.

This sequence belongs to the UppP family.

Its subcellular location is the cell inner membrane. It carries out the reaction di-trans,octa-cis-undecaprenyl diphosphate + H2O = di-trans,octa-cis-undecaprenyl phosphate + phosphate + H(+). Catalyzes the dephosphorylation of undecaprenyl diphosphate (UPP). Confers resistance to bacitracin. In Stenotrophomonas maltophilia (strain R551-3), this protein is Undecaprenyl-diphosphatase.